Here is a 357-residue protein sequence, read N- to C-terminus: Biotin synthase (357 aa).

A Radical SAM core domain is found at 41-268; it reads NEVQISRLLS…KSRVRLSAGR (228 aa). [4Fe-4S] cluster-binding residues include Cys56, Cys60, and Cys63. Cys100, Cys131, Cys191, and Arg263 together coordinate [2Fe-2S] cluster.

This sequence belongs to the radical SAM superfamily. Biotin synthase family. Homodimer. The cofactor is [4Fe-4S] cluster. Requires [2Fe-2S] cluster as cofactor.

The catalysed reaction is (4R,5S)-dethiobiotin + (sulfur carrier)-SH + 2 reduced [2Fe-2S]-[ferredoxin] + 2 S-adenosyl-L-methionine = (sulfur carrier)-H + biotin + 2 5'-deoxyadenosine + 2 L-methionine + 2 oxidized [2Fe-2S]-[ferredoxin]. Its pathway is cofactor biosynthesis; biotin biosynthesis; biotin from 7,8-diaminononanoate: step 2/2. Its function is as follows. Catalyzes the conversion of dethiobiotin (DTB) to biotin by the insertion of a sulfur atom into dethiobiotin via a radical-based mechanism. This Shewanella denitrificans (strain OS217 / ATCC BAA-1090 / DSM 15013) protein is Biotin synthase.